A 401-amino-acid chain; its full sequence is Probable 2,3-bisphosphoglycerate-independent phosphoglycerate mutase (401 aa).

The protein belongs to the BPG-independent phosphoglycerate mutase family. A-PGAM subfamily.

It carries out the reaction (2R)-2-phosphoglycerate = (2R)-3-phosphoglycerate. The protein operates within carbohydrate degradation; glycolysis; pyruvate from D-glyceraldehyde 3-phosphate: step 3/5. In terms of biological role, catalyzes the interconversion of 2-phosphoglycerate and 3-phosphoglycerate. The polypeptide is Probable 2,3-bisphosphoglycerate-independent phosphoglycerate mutase (Thermotoga neapolitana (strain ATCC 49049 / DSM 4359 / NBRC 107923 / NS-E)).